The primary structure comprises 216 residues: FGFR1 oncogene partner 2 homolog (216 aa).

Coiled coils occupy residues 33–102 and 131–185; these read TTTL…LIMS and SKEL…ITRA. The disordered stretch occupies residues 193–216; sequence EDAAESSSHSASSVPNTDLSLRKS. A compositionally biased stretch (polar residues) spans 206 to 216; the sequence is VPNTDLSLRKS.

Belongs to the SIKE family.

It localises to the cytoplasm. This is FGFR1 oncogene partner 2 homolog (fgfr1op2) from Xenopus tropicalis (Western clawed frog).